The chain runs to 154 residues: Terephthalate 1,2-dioxygenase, terminal oxygenase component subunit beta 1 (154 aa).

This sequence belongs to the bacterial ring-hydroxylating dioxygenase beta subunit family. Heterotetramer composed of 2 alpha (TphA2I and TphA2II) and 2 beta (TphA3I and TphA3II) subunits. Part of a multicomponent enzyme system composed of a reductase (TphA1I or TphA1II) and a two-subunit oxygenase component (TphA2I or TphA2II and TphA3I or TphA3II). It depends on Fe cation as a cofactor.

It carries out the reaction terephthalate + NADH + O2 + H(+) = (3S,4R)-3,4-dihydroxycyclohexa-1,5-diene-1,4-dicarboxylate + NAD(+). Its activity is regulated as follows. Inhibited by EDTA. Component of the terephthalate 1,2-dioxygenase multicomponent enzyme system which catalyzes the dioxygenation of terephthalate (TER/TPA) to 1,2-dihydroxy-3,5-cyclohexadiene-1,4-dicarboxylic acid (DCD). It can also use 2,5-dicarboxypyridine (PDC) and 1,4-napthalenedicarboxylic acid (NDC) as substrates, and preferentially uses NADPH which is the physiological electron donor. The sequence is that of Terephthalate 1,2-dioxygenase, terminal oxygenase component subunit beta 1 (tphA3I) from Comamonas sp.